A 260-amino-acid chain; its full sequence is Mediator of RNA polymerase II transcription subunit 7 (260 aa).

The interval 1 to 21 (MAEAGQPRALPTAFAPPPPLW) is disordered.

Belongs to the Mediator complex subunit 7 family. Component of the Mediator complex.

The protein localises to the nucleus. In terms of biological role, component of the Mediator complex, a coactivator involved in the regulated transcription of nearly all RNA polymerase II-dependent genes. Mediator functions as a bridge to convey information from gene-specific regulatory proteins to the basal RNA polymerase II transcription machinery. Mediator is recruited to promoters by direct interactions with regulatory proteins and serves as a scaffold for the assembly of a functional preinitiation complex with RNA polymerase II and the general transcription factors. The chain is Mediator of RNA polymerase II transcription subunit 7 (med7) from Aspergillus clavatus (strain ATCC 1007 / CBS 513.65 / DSM 816 / NCTC 3887 / NRRL 1 / QM 1276 / 107).